Here is a 579-residue protein sequence, read N- to C-terminus: Capsid vertex component 2 (579 aa).

Positions 1 to 46 (MSRFMHFYKSPVPLVLQAHKKNCLVYTNLRTRRLRLLAQLNQREKE) are interaction with major capsid protein/MCP. Residues 92-134 (RPNEQVSSSTTTGHNNTTGTPTQSVVSGTGAVTGTGGTSSVAP) form a disordered region. A compositionally biased stretch (low complexity) spans 101-121 (TTTGHNNTTGTPTQSVVSGTG).

This sequence belongs to the herpesviridae CVC2 protein family. In terms of assembly, heterodimerizes with CVC1. Interacts with major capsid protein/MCP and triplex capsid protein 1/TRX1 at the pentamer vertices. Interacts with the large tegument protein/LTP.

Its subcellular location is the virion. It localises to the host nucleus. Its function is as follows. Capsid vertex-specific component that plays a role during viral DNA encapsidation, assuring correct genome cleavage and presumably stabilizing capsids that contain full-length viral genomes. Participates in the interaction between the capsid and the tegument through interaction with the large tegument protein/LTP. In Elephantid herpesvirus 1 (isolate Asian elephant/Berlin/Kiba/1998) (EIHV-1), this protein is Capsid vertex component 2.